Consider the following 209-residue polypeptide: Uracil phosphoribosyltransferase (209 aa).

Residues R78, R103, and 130–138 (DPMLATAGS) contribute to the 5-phospho-alpha-D-ribose 1-diphosphate site. Uracil is bound by residues I193 and 198–200 (GDA). Residue D199 participates in 5-phospho-alpha-D-ribose 1-diphosphate binding.

Belongs to the UPRTase family. The cofactor is Mg(2+).

The catalysed reaction is UMP + diphosphate = 5-phospho-alpha-D-ribose 1-diphosphate + uracil. Its pathway is pyrimidine metabolism; UMP biosynthesis via salvage pathway; UMP from uracil: step 1/1. With respect to regulation, allosterically activated by GTP. In terms of biological role, catalyzes the conversion of uracil and 5-phospho-alpha-D-ribose 1-diphosphate (PRPP) to UMP and diphosphate. The sequence is that of Uracil phosphoribosyltransferase from Methylibium petroleiphilum (strain ATCC BAA-1232 / LMG 22953 / PM1).